An 84-amino-acid polypeptide reads, in one-letter code: Large ribosomal subunit protein bL31B (84 aa).

The protein belongs to the bacterial ribosomal protein bL31 family. Type B subfamily. Part of the 50S ribosomal subunit.

In terms of biological role, binds the 23S rRNA. This chain is Large ribosomal subunit protein bL31B, found in Rhodococcus jostii (strain RHA1).